Consider the following 337-residue polypeptide: Undecaprenyl-phosphate 4-deoxy-4-formamido-L-arabinose transferase (337 aa).

2 consecutive transmembrane segments (helical) span residues 235–255 (LSIIGFSMALLGVLFAALLIV) and 270–290 (FVLFAVLFVFTGGQFIGMGLL).

It belongs to the glycosyltransferase 2 family.

Its subcellular location is the cell inner membrane. It catalyses the reaction UDP-4-deoxy-4-formamido-beta-L-arabinose + di-trans,octa-cis-undecaprenyl phosphate = 4-deoxy-4-formamido-alpha-L-arabinopyranosyl di-trans,octa-cis-undecaprenyl phosphate + UDP. The protein operates within glycolipid biosynthesis; 4-amino-4-deoxy-alpha-L-arabinose undecaprenyl phosphate biosynthesis; 4-amino-4-deoxy-alpha-L-arabinose undecaprenyl phosphate from UDP-4-deoxy-4-formamido-beta-L-arabinose and undecaprenyl phosphate: step 1/2. It functions in the pathway bacterial outer membrane biogenesis; lipopolysaccharide biosynthesis. In terms of biological role, catalyzes the transfer of 4-deoxy-4-formamido-L-arabinose from UDP to undecaprenyl phosphate. The modified arabinose is attached to lipid A and is required for resistance to polymyxin and cationic antimicrobial peptides. The protein is Undecaprenyl-phosphate 4-deoxy-4-formamido-L-arabinose transferase of Pseudomonas syringae pv. syringae (strain B728a).